Here is a 354-residue protein sequence, read N- to C-terminus: tRNA-specific 2-thiouridylase MnmA (354 aa).

ATP-binding positions include 6–13 (LLSGGVDS) and L33. The Nucleophile role is filled by C100. C100 and C195 form a disulfide bridge. G123 serves as a coordination point for ATP. The segment at 145–147 (KDQ) is interaction with tRNA. C195 serves as the catalytic Cysteine persulfide intermediate.

This sequence belongs to the MnmA/TRMU family.

It is found in the cytoplasm. The catalysed reaction is S-sulfanyl-L-cysteinyl-[protein] + uridine(34) in tRNA + AH2 + ATP = 2-thiouridine(34) in tRNA + L-cysteinyl-[protein] + A + AMP + diphosphate + H(+). In terms of biological role, catalyzes the 2-thiolation of uridine at the wobble position (U34) of tRNA, leading to the formation of s(2)U34. The protein is tRNA-specific 2-thiouridylase MnmA of Borrelia hermsii (strain HS1 / DAH).